A 310-amino-acid chain; its full sequence is Nodulation protein D 2 (310 aa).

One can recognise an HTH lysR-type domain in the interval leucine 6 to threonine 63. A DNA-binding region (H-T-H motif) is located at residues leucine 23–alanine 42.

The protein belongs to the LysR transcriptional regulatory family.

NodD regulates the expression of the nodABCFE genes which encode other nodulation proteins. NodD is also a negative regulator of its own expression. Binds flavonoids as inducers. In Rhizobium meliloti (strain 1021) (Ensifer meliloti), this protein is Nodulation protein D 2 (nodD2).